The sequence spans 390 residues: Neuromedin-B receptor (390 aa).

Positions 1–20 (MPPRSLPNLSLPTEASESEL) are disordered. Over 1–41 (MPPRSLPNLSLPTEASESELEPEVWENDFLPDSDGTTAELV) the chain is Extracellular. N-linked (GlcNAc...) asparagine glycosylation is present at asparagine 8. A helical membrane pass occupies residues 42 to 65 (IRCVIPSLYLIIISVGLLGNIMLV). Over 66 to 79 (KIFLTNSTMRSVPN) the chain is Cytoplasmic. The chain crosses the membrane as a helical span at residues 80–99 (IFISNLAAGDLLLLLTCVPV). At 100-117 (DASRYFFDEWVFGKLGCK) the chain is on the extracellular side. Cysteine 116 and cysteine 198 are oxidised to a cystine. The chain crosses the membrane as a helical span at residues 118–139 (LIPAIQLTSVGVSVFTLTALSA). Residues 140–156 (DRYRAIVNPMDMQTSGV) are Cytoplasmic-facing. Residues 157 to 177 (VLWTSLKAVGIWVVSVLLAVP) traverse the membrane as a helical segment. Residues 178 to 211 (EAVFSEVARIGSSDNSSFTACIPYPQTDELHPKI) lie on the Extracellular side of the membrane. Asparagine 192 carries N-linked (GlcNAc...) asparagine glycosylation. A helical transmembrane segment spans residues 212 to 235 (HSVLIFLVYFLIPLVIISIYYYHI). Residues 236–266 (AKTLIRSAHNLPGEYNEHTKKQMETRKRLAK) lie on the Cytoplasmic side of the membrane. Residues 267–287 (IVLVFVGCFVFCWFPNHILYL) form a helical membrane-spanning segment. Over 288 to 299 (YRSFNYKEIDPS) the chain is Extracellular. A helical membrane pass occupies residues 300–327 (LGHMIVTLVARVLSFSNSCVNPFALYLL). The Cytoplasmic segment spans residues 328–390 (SESFRKHFNS…GHSTKQEIAL (63 aa)). Cysteine 341 is lipidated: S-palmitoyl cysteine. Position 352 is a phosphoserine (serine 352).

The protein belongs to the G-protein coupled receptor 1 family. As to expression, brain (olfactory bulb and central thalamic regions), and esophagus.

It localises to the cell membrane. In terms of biological role, receptor for neuromedin-B. Contributes to the maintenance of basal sigh rate through signaling in the pre-Botzinger complex, a cluster of several thousand neurons in the ventrolateral medulla responsible for inspiration during respiratory activity. Contributes to the induction of sneezing following exposure to chemical irritants or allergens which causes release of NMB by nasal sensory neurons and activation of NMBR-expressing neurons in the sneeze-evoking region of the brainstem. These in turn activate neurons of the caudal ventral respiratory group, giving rise to the sneezing response. Contributes to induction of acute itch, possibly through its activation on dorsal root ganglion neurons by the NMB peptide. Plays a role in the innate immune response to influenza A virus infection by enhancing interferon alpha expression and reducing expression of IL6. Plays a role in CSF1-induced proliferation of osteoclast precursors by contributing to the positive regulation of the expression of the CSF1 receptor CSF1R. This Rattus norvegicus (Rat) protein is Neuromedin-B receptor (Nmbr).